Consider the following 166-residue polypeptide: Testis-expressed protein 51 (166 aa).

The N-terminal stretch at 1 to 15 (MLPLLIICLLPAIEG) is a signal peptide. The helical transmembrane segment at 138–154 (SLWAVSLSSALLLAIAG) threads the bilayer.

It is found in the membrane. In Homo sapiens (Human), this protein is Testis-expressed protein 51.